We begin with the raw amino-acid sequence, 95 residues long: Co-chaperonin GroES (95 aa).

This sequence belongs to the GroES chaperonin family. Heptamer of 7 subunits arranged in a ring. Interacts with the chaperonin GroEL.

The protein localises to the cytoplasm. Functionally, together with the chaperonin GroEL, plays an essential role in assisting protein folding. The GroEL-GroES system forms a nano-cage that allows encapsulation of the non-native substrate proteins and provides a physical environment optimized to promote and accelerate protein folding. GroES binds to the apical surface of the GroEL ring, thereby capping the opening of the GroEL channel. The polypeptide is Co-chaperonin GroES (Chlorobium phaeobacteroides (strain DSM 266 / SMG 266 / 2430)).